The chain runs to 472 residues: 3-isopropylmalate dehydratase large subunit (472 aa).

3 residues coordinate [4Fe-4S] cluster: cysteine 347, cysteine 407, and cysteine 410.

Belongs to the aconitase/IPM isomerase family. LeuC type 1 subfamily. In terms of assembly, heterodimer of LeuC and LeuD. The cofactor is [4Fe-4S] cluster.

The enzyme catalyses (2R,3S)-3-isopropylmalate = (2S)-2-isopropylmalate. The protein operates within amino-acid biosynthesis; L-leucine biosynthesis; L-leucine from 3-methyl-2-oxobutanoate: step 2/4. In terms of biological role, catalyzes the isomerization between 2-isopropylmalate and 3-isopropylmalate, via the formation of 2-isopropylmaleate. This chain is 3-isopropylmalate dehydratase large subunit, found in Parasynechococcus marenigrum (strain WH8102).